The sequence spans 221 residues: Endonuclease V (221 aa).

Positions 43 and 111 each coordinate Mg(2+).

Belongs to the endonuclease V family. The cofactor is Mg(2+).

The protein resides in the cytoplasm. The catalysed reaction is Endonucleolytic cleavage at apurinic or apyrimidinic sites to products with a 5'-phosphate.. In terms of biological role, DNA repair enzyme involved in the repair of deaminated bases. Selectively cleaves double-stranded DNA at the second phosphodiester bond 3' to a deoxyinosine leaving behind the intact lesion on the nicked DNA. This chain is Endonuclease V, found in Azotobacter vinelandii (strain DJ / ATCC BAA-1303).